Reading from the N-terminus, the 600-residue chain is Beta-hexosaminidase (600 aa).

A signal peptide spans 1 to 18 (MRISQICTVLSTVTSAVA). A propeptide spanning residues 19–96 (VGVNPLPAPR…PFPTPTAGAS (78 aa)) is cleaved from the precursor. A glycan (O-linked (Man...) threonine) is linked at Thr78. O-linked (Man...) serine glycans are attached at residues Ser83 and Ser84. Active-site charge relay system residues include Asp222 and His275. Cys290 and Cys351 are disulfide-bonded. Asn318 carries N-linked (HexNAc...) asparagine glycosylation. The active-site Charge relay system is the Glu346. N-linked (GlcNAc...) asparagine glycosylation occurs at Asn353. N-linked (HexNAc...) asparagine glycosylation occurs at Asn387. An N-linked (GlcNAc...) asparagine glycan is attached at Asn428. Cys448 and Cys483 form a disulfide bridge. 2 N-linked (GlcNAc...) asparagine glycosylation sites follow: Asn500 and Asn525. A disulfide bond links Cys583 and Cys590.

It belongs to the glycosyl hydrolase 20 family. Homodimer. Oligosaccharide moieties may also take part in the dimerization. Dimerization is a pH-dependent reversible process. The individual catalytic cores dimerize and the catalytic core of one subunit in the active dimer interacts with the propeptide of the second subunit. Post-translationally, the precursor of the propeptide is intracellularly processed in the endoplasmic reticulum by a dibasic peptidase, different from Kex2, removing Lys-97--Arg-101 from the precursor producing the activated propeptide. The propeptide binds non-covalently to the catalytic domain. Propeptide binding is necessary for full activation of the enzyme, dimerization of the catalytic domain and secretion of the active enzyme. O-glycosylated. O-glycosylation (O-mannosylation) at the C-terminus of the propeptide is necessary for full enzyme activity. N-glycosylated. N-glycosylation of the catalytic domain increases the stability and solubility of the enzyme, especially at low pH. Contains high mannose-type (M4-M11) N-glycans at the C-terminus. N-glycan deglycosylation does not affect enzyme activity.

The protein localises to the secreted. It carries out the reaction Hydrolysis of terminal non-reducing N-acetyl-D-hexosamine residues in N-acetyl-beta-D-hexosaminides.. Its activity is regulated as follows. Activated by non-covalent binding of the propeptide to the catalytic domain. The concentration of the propeptide is regulated in the endoplasmic reticulum and the propeptide thus regulates the amount of the active enzyme at various stages of the growth cycle. The dimeric enzyme has about half of the maximal activity in the presence of one bound propeptide, but is fully active with two bound O-glycosylated propeptides. Inhibited by N-acetylglucosamine (NAG)-thiazoline. Selectively hydrolyzes GlcNAcbeta(1-&gt;4)GlcNAc (N,N'-diacetylchitobiose) and Gal-NAcbeta(1-&gt;4)GlcNAc, but not their C-2 epimers GlcNAcbeta(1-&gt;4)ManNAc or Gal-NAcbeta(1-&gt;4)ManNAc. However, hydrolyzes both GlcNAcbeta(1-&gt;6)GlcNAc and GlcNAcbeta(1-&gt;6)ManNAc. Part of the binary chitinolytic system. Involved in hydrolysis of chitobiose and higher chito-oligomers (produced from cell wall chitin by endochitinases), thus contributing to the formation of germ tubes, fruit-bodies and septa during hyphenation. Hydrolyzes synthetic substrate p-nitrophenyl-beta-N-acetyl-D-glucosaminide (pNP-GlcNAc). Hydrolyzes synthetic substrate p-nitrophenyl-beta-N-acetyl-D-galactosaminide (pNP-GalNAc). Hydrolyzes chromogenic substrate 4-nitrophenyl-2-acetamido-2-deoxyglucopyranoside. This is Beta-hexosaminidase from Aspergillus oryzae (Yellow koji mold).